We begin with the raw amino-acid sequence, 709 residues long: PP2C-like domain-containing protein CG9801 (709 aa).

Disordered stretches follow at residues 121–222, 503–530, and 678–709; these read DCYG…NSER, LHPS…SRPK, and GGGE…ETNF. A compositionally biased stretch (polar residues) spans 130–143; the sequence is PPVQVATQNSTRLT. Positions 182 to 196 are enriched in low complexity; the sequence is ANLAAASAGTDAGKA. The span at 197–217 shows a compositional bias: polar residues; sequence NSDQNNRNVLNAKTEVSTDGD. In terms of domain architecture, PPM-type phosphatase spans 259–503; it reads SVSLYETNML…KSASAIYARL (245 aa).

The chain is PP2C-like domain-containing protein CG9801 from Drosophila melanogaster (Fruit fly).